The following is a 653-amino-acid chain: MVLDEYMWMVIVGFIIAFVLAFSVGANDVANSFGTAVGSGVVTLRQACILASIFETIGSVLLGAKVGETIRKGIIDVNLYNNTVDLLMAGEVSAMVGSAVWQLIASFLKLPVSGTHCIVGATIGFSLVAVGAHSVQWMQLVKIVASWFISPLLSGLMSGALFLMIKFFILNKEDPVPNGLKALPVFYAATIGINVFSILFTGAPLLGLQTFPVWATALLSVGIAIVFALVVWFFVCPWMKKKIASRLKKEGALSRISEESLDKIQDEDTSVFKELPGAKGNDESVLPLTSSSPDAAVSSESVSNGNTRVPYGRAASMTNGSIRSPFSNGTFNFDGHTVKSDAHVYHTVHKDSGLYKDLLHNIHLDRVKIDRSAPENNYRILRRNNSYTCYTAAICGVPVHSTFKSSDIAMPEDSEKLVGDTVSFSKKRLRYDSYSSYCNAVAEAEIEAEEGGVEMKLAAELADPNPPQDDSLEEDKEEKDKSQVHLLFHFLQILTACFGSFAHGGNDVSNAIGPLVALWLIYQQGGVMQEASTPVWLLLYGGVGICAGLWVWGRRVIQTMGKDLTPITPSSGFTIELASAFTVVVASNIGLPISTTHCKVGSVVAVGWIRSRKAVDWRLFRNIFLAWFVTVPVAGLFSAGVMAILQYGILPYV.

The Extracellular segment spans residues 1–5; it reads MVLDE. A helical transmembrane segment spans residues 6–26; it reads YMWMVIVGFIIAFVLAFSVGA. The Cytoplasmic portion of the chain corresponds to 27–46; the sequence is NDVANSFGTAVGSGVVTLRQ. The chain crosses the membrane as a helical span at residues 47 to 67; it reads ACILASIFETIGSVLLGAKVG. At 68-86 the chain is on the extracellular side; sequence ETIRKGIIDVNLYNNTVDL. An N-linked (GlcNAc...) asparagine glycan is attached at N81. The helical transmembrane segment at 87-107 threads the bilayer; it reads LMAGEVSAMVGSAVWQLIASF. Topologically, residues 108-109 are cytoplasmic; that stretch reads LK. Residues 110–130 traverse the membrane as a helical segment; it reads LPVSGTHCIVGATIGFSLVAV. Topologically, residues 131–142 are extracellular; sequence GAHSVQWMQLVK. Residues 143–163 form a helical membrane-spanning segment; it reads IVASWFISPLLSGLMSGALFL. The Cytoplasmic segment spans residues 164 to 187; sequence MIKFFILNKEDPVPNGLKALPVFY. A helical transmembrane segment spans residues 188 to 208; sequence AATIGINVFSILFTGAPLLGL. Over 209 to 217 the chain is Extracellular; the sequence is QTFPVWATA. Residues 218-238 traverse the membrane as a helical segment; that stretch reads LLSVGIAIVFALVVWFFVCPW. Topologically, residues 239-483 are cytoplasmic; it reads MKKKIASRLK…EDKEEKDKSQ (245 aa). The disordered stretch occupies residues 275 to 310; that stretch reads LPGAKGNDESVLPLTSSSPDAAVSSESVSNGNTRVP. The span at 290–303 shows a compositional bias: low complexity; the sequence is SSSPDAAVSSESVS. The helical transmembrane segment at 484 to 504 threads the bilayer; it reads VHLLFHFLQILTACFGSFAHG. The Extracellular segment spans residues 505–532; it reads GNDVSNAIGPLVALWLIYQQGGVMQEAS. The helical transmembrane segment at 533 to 553 threads the bilayer; that stretch reads TPVWLLLYGGVGICAGLWVWG. The Cytoplasmic portion of the chain corresponds to 554–572; sequence RRVIQTMGKDLTPITPSSG. A helical membrane pass occupies residues 573 to 587; that stretch reads FTIELASAFTVVVAS. Topologically, residues 588-594 are extracellular; that stretch reads NIGLPIS. A helical transmembrane segment spans residues 595 to 610; it reads TTHCKVGSVVAVGWIR. Topologically, residues 611–622 are cytoplasmic; the sequence is SRKAVDWRLFRN. The chain crosses the membrane as a helical span at residues 623–643; it reads IFLAWFVTVPVAGLFSAGVMA. Topologically, residues 644 to 653 are extracellular; it reads ILQYGILPYV.

Belongs to the inorganic phosphate transporter (PiT) (TC 2.A.20) family. In terms of assembly, homodimer.

It is found in the cell membrane. The protein localises to the apical cell membrane. It carries out the reaction 2 Na(+)(out) + phosphate(out) = 2 Na(+)(in) + phosphate(in). In terms of biological role, sodium-phosphate symporter which preferentially transports the monovalent form of phosphate with a stoichiometry of two sodium ions per phosphate ion. The chain is Sodium-dependent phosphate transporter 2 (slc20a2) from Xenopus laevis (African clawed frog).